The following is a 445-amino-acid chain: C-terminal-binding protein 2 (445 aa).

An Asymmetric dimethylarginine modification is found at arginine 22. Residues serine 106, 186-191, aspartate 210, 243-249, 270-272, and aspartate 296 each bind NAD(+); these read IGFGRT, CNLNEHN, and AAR. Residue arginine 272 is part of the active site. Glutamate 301 is an active-site residue. Histidine 321 functions as the Proton donor in the catalytic mechanism. Residue 321 to 324 coordinates NAD(+); that stretch reads HTAW. Residues 414 to 445 are disordered; it reads THNLPTVAHPSQAPSPNQPTKHGDNREHPNEQ. Residue serine 428 is modified to Phosphoserine. Over residues 434 to 445 the composition is skewed to basic and acidic residues; sequence KHGDNREHPNEQ.

This sequence belongs to the D-isomer specific 2-hydroxyacid dehydrogenase family. As to quaternary structure, interacts with the C-terminus of adenovirus E1A protein. Can form homodimers or heterodimers of CTBP1 and CTBP2. Interacts with HIPK2. Interacts with ZNF217, PNN, NRIP1 and WIZ. Interacts with PRDM16; represses white adipose tissue (WAT)-specific genes expression. Interacts with MCRIP1. In terms of tissue distribution, isoform 2 is specifically localized in synaptic ribbon (at protein level).

The protein localises to the nucleus. It is found in the synapse. Functionally, corepressor targeting diverse transcription regulators. Functions in brown adipose tissue (BAT) differentiation. Isoform 2 probably acts as a scaffold for specialized synapses. In Bos taurus (Bovine), this protein is C-terminal-binding protein 2 (CTBP2).